A 203-amino-acid polypeptide reads, in one-letter code: MAASSSYMACAKFSMLGWLGGRRELKMRRVISVSPQEQAEVQESQEVNAQEEEKVKQPVQPRPVEPQVNVKSKNMGREYGGQWLSSVTRHVRIYAAYIDPETCEFDQTQTDKLTLILDPTDEFVWTDETCYKVYSYFQELVDHYEGAPLTEYTLRLIGSDIEHYIRKLLYDGEIKYNMNARVLNFSMGKPRILFNNDGQLQDV.

Residues 1–21 (MAASSSYMACAKFSMLGWLGG) constitute a chloroplast transit peptide. The segment covering 34–48 (SPQEQAEVQESQEVN) has biased composition (low complexity). Residues 34-61 (SPQEQAEVQESQEVNAQEEEKVKQPVQP) form a disordered region.

This sequence belongs to the NDH complex subunit M family. In terms of assembly, part of the chloroplast NDH complex, composed of a mixture of chloroplast and nucleus encoded subunits. Component of the NDH subcomplex A, at least composed of ndhH, ndhI, ndhJ, ndhK, ndhL, ndhM, ndhN and ndhO.

It is found in the plastid. The protein resides in the chloroplast thylakoid membrane. It catalyses the reaction a plastoquinone + NADH + (n+1) H(+)(in) = a plastoquinol + NAD(+) + n H(+)(out). It carries out the reaction a plastoquinone + NADPH + (n+1) H(+)(in) = a plastoquinol + NADP(+) + n H(+)(out). Its function is as follows. NDH shuttles electrons from NAD(P)H:plastoquinone, via FMN and iron-sulfur (Fe-S) centers, to quinones in the photosynthetic chain and possibly in a chloroplast respiratory chain. The immediate electron acceptor for the enzyme in this species is believed to be plastoquinone. Couples the redox reaction to proton translocation, and thus conserves the redox energy in a proton gradient. The chain is NAD(P)H-quinone oxidoreductase subunit M, chloroplastic from Populus jackii (Balm of Gilead).